A 312-amino-acid chain; its full sequence is MKVAVLGAAGGIGQALALLLKTQLPSGSDLSLYDIAPVTPGVAVDLSHIPTAVNIKGFSGEDATPALQGADIVLISAGVARKPGMDRSDLFNVNAGIVRNLVEQIARTCPNALIGIITNPVNTTVAIAAEVLKKAGVYDKNKLFGITTLDTIRSNTFVAELKGKQPQDIEVPVIGGHSGVTILPLLSQIPGVSFTEQEVADLTKRIQNAGTEVVEAKAGGGSATLSMGQAAARFGLSLVRALQGESNVVECSYVEGDGKYARFFAQPILLGKNGVAERKDIGKLSAFEQQALENMLDVLHKDIELGEKFVNQ.

NAD(+) is bound by residues 7-13 (GAAGGIG) and Asp34. Positions 81 and 87 each coordinate substrate. Residues Asn94 and 117–119 (ITN) contribute to the NAD(+) site. Substrate-binding residues include Asn119 and Arg153. His177 (proton acceptor) is an active-site residue. Residue Met227 participates in NAD(+) binding.

This sequence belongs to the LDH/MDH superfamily. MDH type 1 family. Homodimer.

It carries out the reaction (S)-malate + NAD(+) = oxaloacetate + NADH + H(+). Its function is as follows. Catalyzes the reversible oxidation of malate to oxaloacetate. The protein is Malate dehydrogenase of Yersinia pseudotuberculosis serotype O:1b (strain IP 31758).